The primary structure comprises 177 residues: Apoptosis regulatory protein Siva (177 aa).

The residue at position 34 (tyrosine 34) is a Phosphotyrosine; by ABL2. Residues arginine 36–aspartate 55 are interaction with BCL2L1 isoform Bcl-x(L) and inhibition of BCL2L1 anti-apoptotic activity.

Binds through its N-terminal region to the C-terminus of CD27 and to PXMP2/PMP22. Binds to the C-terminus of TNFRSF18/GITR. Binds to BCL2L1/BCLX isoform Bcl-x(L) but not to BAX. The cofactor is Zn(2+). As to expression, in post-ischemic kidney, found in cells lining the S3 segment of proximal tubules at 12 hours and 1 day post-ischemia. At five and seven days post-ischemia, found in epithelial cells of papillary proliferations in regenerating tubules.

The protein resides in the cytoplasm. It localises to the nucleus. Functionally, induces CD27-mediated apoptosis. Inhibits BCL2L1 isoform Bcl-x(L) anti-apoptotic activity. Inhibits activation of NF-kappa-B and promotes T-cell receptor-mediated apoptosis. In Rattus norvegicus (Rat), this protein is Apoptosis regulatory protein Siva (Siva1).